Consider the following 463-residue polypeptide: 3-isopropylmalate dehydratase large subunit (463 aa).

Residues C347, C407, and C410 each contribute to the [4Fe-4S] cluster site.

This sequence belongs to the aconitase/IPM isomerase family. LeuC type 1 subfamily. Heterodimer of LeuC and LeuD. Requires [4Fe-4S] cluster as cofactor.

The enzyme catalyses (2R,3S)-3-isopropylmalate = (2S)-2-isopropylmalate. It participates in amino-acid biosynthesis; L-leucine biosynthesis; L-leucine from 3-methyl-2-oxobutanoate: step 2/4. Functionally, catalyzes the isomerization between 2-isopropylmalate and 3-isopropylmalate, via the formation of 2-isopropylmaleate. The chain is 3-isopropylmalate dehydratase large subunit from Buchnera aphidicola subsp. Cinara cedri (strain Cc).